A 485-amino-acid polypeptide reads, in one-letter code: MDLFDLTLHELHAKLKSKEVSSREATSAMLDRIAELEPRINAFITVTPERALAEAEAADRRIAAGEADVLTGIPLAVKDIFLTEGTLTTCGSRILNNFIPPYSATSFEKLKQRGMVLLGKLNQDEFAMGSSNESSASGPCRNPWNTDCIPGGSSGGSAAAIAARQATVTLGTDTGGSIRQPASHCGCVGLKPTYGRVSRYGVIAYASSLDQVGPLTRDVTDCAIMLGALAGHDPKDSTSVDRPVPDYQAALTNDIRGLRIGLPREYFIEGLDPDVQASMDQAIETYRRLGAEFTEISLPHTDYAVASYYLIATAEASANLARYDGVRFGHRAEQAEGLLEMYSRSRSQGFGSEVKRRIMLGTYALSSGYYDAYYLKAQKVRTLIMADFIQAFEGVDLILTPVAPTPAFRIGEKVNDPLQMYLSDIFTIPVNLAGTCAMSLPAGISGQGLPIGVQLIGKPFGEETILRAAHAFEQATEWHSLRAPL.

Residues lysine 78 and serine 153 each act as charge relay system in the active site. Catalysis depends on serine 177, which acts as the Acyl-ester intermediate.

This sequence belongs to the amidase family. GatA subfamily. In terms of assembly, heterotrimer of A, B and C subunits.

The enzyme catalyses L-glutamyl-tRNA(Gln) + L-glutamine + ATP + H2O = L-glutaminyl-tRNA(Gln) + L-glutamate + ADP + phosphate + H(+). Functionally, allows the formation of correctly charged Gln-tRNA(Gln) through the transamidation of misacylated Glu-tRNA(Gln) in organisms which lack glutaminyl-tRNA synthetase. The reaction takes place in the presence of glutamine and ATP through an activated gamma-phospho-Glu-tRNA(Gln). In Pelobacter propionicus (strain DSM 2379 / NBRC 103807 / OttBd1), this protein is Glutamyl-tRNA(Gln) amidotransferase subunit A.